A 123-amino-acid polypeptide reads, in one-letter code: Methylmalonyl-CoA carboxyltransferase 1.3S subunit (123 aa).

A Biotinyl-binding domain is found at 46–123 (GAGAGKAGEG…QGGQGLIKIG (78 aa)). Position 89 is an N6-biotinyllysine (Lys89).

As to quaternary structure, transcarboxylase is composed of three subunits: 1.3S, 5S, and 12S. The core of the enzyme is composed of six 12S subunits. On each side of the core there are three pairs of 5S subunits. Each 5S dimer is attached to the core by two 1.3S subunits. Thus the total number of chains is 30 (6 + 12 + 12).

The enzyme catalyses (S)-methylmalonyl-CoA + pyruvate = propanoyl-CoA + oxaloacetate. Its function is as follows. The biotinyl 1.3S subunit serves as a carboxyl carrier between the substrate-binding sites on the 12S and 5S subunits. This chain is Methylmalonyl-CoA carboxyltransferase 1.3S subunit, found in Propionibacterium freudenreichii subsp. shermanii.